The chain runs to 386 residues: Succinate--CoA ligase [ADP-forming] subunit beta (386 aa).

In terms of domain architecture, ATP-grasp spans 9–244 (KEILRKYGVP…HDEEDPLETR (236 aa)). Residues K46, 53 to 55 (GRG), E99, C102, and E107 each bind ATP. Residues N199 and D213 each coordinate Mg(2+). Residues N264 and 321–323 (GIM) each bind substrate.

This sequence belongs to the succinate/malate CoA ligase beta subunit family. In terms of assembly, heterotetramer of two alpha and two beta subunits. Mg(2+) serves as cofactor.

It carries out the reaction succinate + ATP + CoA = succinyl-CoA + ADP + phosphate. The catalysed reaction is GTP + succinate + CoA = succinyl-CoA + GDP + phosphate. It participates in carbohydrate metabolism; tricarboxylic acid cycle; succinate from succinyl-CoA (ligase route): step 1/1. Functionally, succinyl-CoA synthetase functions in the citric acid cycle (TCA), coupling the hydrolysis of succinyl-CoA to the synthesis of either ATP or GTP and thus represents the only step of substrate-level phosphorylation in the TCA. The beta subunit provides nucleotide specificity of the enzyme and binds the substrate succinate, while the binding sites for coenzyme A and phosphate are found in the alpha subunit. This is Succinate--CoA ligase [ADP-forming] subunit beta from Rickettsia conorii (strain ATCC VR-613 / Malish 7).